Here is a 156-residue protein sequence, read N- to C-terminus: 3-dehydroquinate dehydratase (156 aa).

The Proton acceptor role is filled by Tyr24. Asn76, His82, and Asp89 together coordinate substrate. The active-site Proton donor is the His102. Substrate contacts are provided by residues 103–104 (IS) and Arg113.

The protein belongs to the type-II 3-dehydroquinase family. As to quaternary structure, homododecamer.

The enzyme catalyses 3-dehydroquinate = 3-dehydroshikimate + H2O. It participates in metabolic intermediate biosynthesis; chorismate biosynthesis; chorismate from D-erythrose 4-phosphate and phosphoenolpyruvate: step 3/7. Its function is as follows. Catalyzes a trans-dehydration via an enolate intermediate. The sequence is that of 3-dehydroquinate dehydratase from Nitrobacter winogradskyi (strain ATCC 25391 / DSM 10237 / CIP 104748 / NCIMB 11846 / Nb-255).